The primary structure comprises 546 residues: ATP synthase subunit alpha (546 aa).

Position 172-179 (172-179) interacts with ATP; it reads GDRKTGKT.

This sequence belongs to the ATPase alpha/beta chains family. As to quaternary structure, F-type ATPases have 2 components, CF(1) - the catalytic core - and CF(0) - the membrane proton channel. CF(1) has five subunits: alpha(3), beta(3), gamma(1), delta(1), epsilon(1). CF(0) has three main subunits: a(1), b(2) and c(9-12). The alpha and beta chains form an alternating ring which encloses part of the gamma chain. CF(1) is attached to CF(0) by a central stalk formed by the gamma and epsilon chains, while a peripheral stalk is formed by the delta and b chains.

The protein resides in the cell membrane. It carries out the reaction ATP + H2O + 4 H(+)(in) = ADP + phosphate + 5 H(+)(out). Its function is as follows. Produces ATP from ADP in the presence of a proton gradient across the membrane. The alpha chain is a regulatory subunit. In Corynebacterium efficiens (strain DSM 44549 / YS-314 / AJ 12310 / JCM 11189 / NBRC 100395), this protein is ATP synthase subunit alpha.